The sequence spans 572 residues: Triacylglycerol lipase OBL1 (572 aa).

A helical membrane pass occupies residues 110–130; sequence GYLVEFFLNLFSLNGNFLGLL. The interval 320-356 is disordered; it reads IPPSESSKSSTSFSDSDAHTGSDLSSDSERPTDTRKK. Positions 323-334 are enriched in low complexity; sequence SESSKSSTSFSD. Over residues 346–356 the composition is skewed to basic and acidic residues; the sequence is DSERPTDTRKK. Residues 391–395 carry the GXSXG motif; the sequence is GHSLG. The active-site Nucleophile is the Ser-393. Active-site charge relay system residues include Asp-457 and His-550.

This sequence belongs to the AB hydrolase superfamily. Lipase family. As to expression, expressed in pollen grains and pollen tubes.

It is found in the lipid droplet. The protein localises to the membrane. The catalysed reaction is 1,2-di-(9Z-octadecenoyl)-glycerol + (9Z)-octadecenoate + H(+) = 1,2,3-tri-(9Z-octadecenoyl)-glycerol + H2O. It carries out the reaction 1-(9Z-octadecenoyl)-glycerol + H2O = glycerol + (9Z)-octadecenoate + H(+). Acid lipase that can hydrolyze a range of triacylglycerols without a clear preference for acyl-chains. Can also cleave 1,2-diacylglycerol, 1,3-diacylglycerol and 1-monoacylglycerol, but not phosphatidylcholine, phosphatidylethanolamine, or sterol esters. Required for pollen tube growth. Triacylglycerol hydrolysis by OBL1 may provide acyl groups for the synthesis of membrane lipids in growing pollen tubes. The polypeptide is Triacylglycerol lipase OBL1 (Nicotiana tabacum (Common tobacco)).